The chain runs to 184 residues: NADH-quinone oxidoreductase subunit B 2 (184 aa).

Positions 59, 60, 125, and 153 each coordinate [4Fe-4S] cluster.

It belongs to the complex I 20 kDa subunit family. NDH-1 is composed of 14 different subunits. Subunits NuoB, C, D, E, F, and G constitute the peripheral sector of the complex. The cofactor is [4Fe-4S] cluster.

It localises to the cell inner membrane. The catalysed reaction is a quinone + NADH + 5 H(+)(in) = a quinol + NAD(+) + 4 H(+)(out). Functionally, NDH-1 shuttles electrons from NADH, via FMN and iron-sulfur (Fe-S) centers, to quinones in the respiratory chain. Couples the redox reaction to proton translocation (for every two electrons transferred, four hydrogen ions are translocated across the cytoplasmic membrane), and thus conserves the redox energy in a proton gradient. The chain is NADH-quinone oxidoreductase subunit B 2 from Solibacter usitatus (strain Ellin6076).